The sequence spans 265 residues: Undecaprenyl-diphosphatase (265 aa).

The next 7 helical transmembrane spans lie at 38 to 58 (RSDF…CLAL), 75 to 95 (RDYV…GLIV), 108 to 128 (PVAW…HFAG), 135 to 155 (VVTW…GVFP), 181 to 201 (FVFM…LLEM), 215 to 235 (VAVA…WLLG), and 244 to 264 (VFAV…PAAA).

The protein belongs to the UppP family.

It localises to the cell inner membrane. The enzyme catalyses di-trans,octa-cis-undecaprenyl diphosphate + H2O = di-trans,octa-cis-undecaprenyl phosphate + phosphate + H(+). In terms of biological role, catalyzes the dephosphorylation of undecaprenyl diphosphate (UPP). Confers resistance to bacitracin. The sequence is that of Undecaprenyl-diphosphatase from Xanthomonas axonopodis pv. citri (strain 306).